Reading from the N-terminus, the 359-residue chain is Ornithine cyclodeaminase (359 aa).

Positions 53 and 77 each coordinate L-ornithine. Residues threonine 92, arginine 120, 147-148, aspartate 169, threonine 209, 232-235, lysine 239, and serine 300 contribute to the NAD(+) site; these read AQ and VGGD. Arginine 120 is an L-ornithine binding site. Aspartate 235 provides a ligand contact to L-ornithine. Aspartate 235 acts as the Proton donor/acceptor in catalysis. Valine 301 contacts L-ornithine.

It belongs to the ornithine cyclodeaminase/mu-crystallin family. Requires NAD(+) as cofactor.

The enzyme catalyses L-ornithine = L-proline + NH4(+). It functions in the pathway amino-acid biosynthesis; L-proline biosynthesis; L-proline from L-ornithine: step 1/1. Catalyzes the conversion of L-ornithine into L-proline with release of ammonia. This is Ornithine cyclodeaminase from Brucella abortus biovar 1 (strain 9-941).